Here is a 54-residue protein sequence, read N- to C-terminus: Small ribosomal subunit protein uS14 (54 aa).

Cys-19, Cys-22, Cys-37, and Cys-40 together coordinate Zn(2+).

Belongs to the universal ribosomal protein uS14 family. Zinc-binding uS14 subfamily. In terms of assembly, part of the 30S ribosomal subunit. Zn(2+) serves as cofactor.

Its function is as follows. Binds 16S rRNA, required for the assembly of 30S particles. The chain is Small ribosomal subunit protein uS14 from Sulfurisphaera tokodaii (strain DSM 16993 / JCM 10545 / NBRC 100140 / 7) (Sulfolobus tokodaii).